Reading from the N-terminus, the 836-residue chain is Probable serine/threonine-protein kinase dyrk1 (836 aa).

The segment covering 99–278 (QQQYQQQHNN…SSNNNNNNKQ (180 aa)) has biased composition (low complexity). Positions 99–286 (QQQYQQQHNN…KQSKYNDGYD (188 aa)) are disordered. The Protein kinase domain occupies 304 to 624 (FEIISSLGKG…PLEALQHSFF (321 aa)). ATP-binding positions include 310–318 (LGKGSFGQV) and Lys333. Asp432 (proton acceptor) is an active-site residue. 3 disordered regions span residues 627–697 (DETS…QQQQ), 718–767 (TYSP…INSN), and 785–836 (NIYN…NNNI). Residues 630–697 (SQPPQQQSQQ…QQLQQQQQQQ (68 aa)) show a composition bias toward low complexity. Positions 718–728 (TYSPTTQQSNH) are enriched in polar residues. Positions 729–744 (KLVDQMKKASMKDKSP) are enriched in basic and acidic residues. The segment covering 785-816 (NIYNNNNNNNNNNNNNNNNNNSNNYNNSNELS) has biased composition (low complexity).

The protein belongs to the protein kinase superfamily. CMGC Ser/Thr protein kinase family. MNB/DYRK subfamily.

The catalysed reaction is L-seryl-[protein] + ATP = O-phospho-L-seryl-[protein] + ADP + H(+). The enzyme catalyses L-threonyl-[protein] + ATP = O-phospho-L-threonyl-[protein] + ADP + H(+). It carries out the reaction L-tyrosyl-[protein] + ATP = O-phospho-L-tyrosyl-[protein] + ADP + H(+). This is Probable serine/threonine-protein kinase dyrk1 (dyrk1) from Dictyostelium discoideum (Social amoeba).